The chain runs to 322 residues: HPr kinase/phosphorylase (322 aa).

Catalysis depends on residues histidine 142 and lysine 163. Position 157–164 (157–164) interacts with ATP; sequence GASGVGKS. Mg(2+) is bound at residue serine 164. Residue aspartate 181 is the Proton acceptor; for phosphorylation activity. Proton donor; for dephosphorylation activity of the active site. An important for the catalytic mechanism of both phosphorylation and dephosphorylation region spans residues 205–214; sequence MEIRGIGIID. A Mg(2+)-binding site is contributed by glutamate 206. The active site involves arginine 247. Residues 268 to 273 form an important for the catalytic mechanism of dephosphorylation region; sequence PVKVGR.

This sequence belongs to the HPrK/P family. In terms of assembly, homohexamer. Mg(2+) is required as a cofactor.

The catalysed reaction is [HPr protein]-L-serine + ATP = [HPr protein]-O-phospho-L-serine + ADP + H(+). It carries out the reaction [HPr protein]-O-phospho-L-serine + phosphate + H(+) = [HPr protein]-L-serine + diphosphate. In terms of biological role, catalyzes the ATP- as well as the pyrophosphate-dependent phosphorylation of a specific serine residue in HPr, a phosphocarrier protein of the phosphoenolpyruvate-dependent sugar phosphotransferase system (PTS). HprK/P also catalyzes the pyrophosphate-producing, inorganic phosphate-dependent dephosphorylation (phosphorolysis) of seryl-phosphorylated HPr (P-Ser-HPr). The two antagonistic activities of HprK/P are regulated by several intracellular metabolites, which change their concentration in response to the absence or presence of rapidly metabolisable carbon sources (glucose, fructose, etc.) in the growth medium. Therefore, by controlling the phosphorylation state of HPr, HPrK/P is a sensor enzyme that plays a major role in the regulation of carbon metabolism and sugar transport: it mediates carbon catabolite repression (CCR), and regulates PTS-catalyzed carbohydrate uptake and inducer exclusion. This is HPr kinase/phosphorylase from Lactobacillus acidophilus (strain ATCC 700396 / NCK56 / N2 / NCFM).